Reading from the N-terminus, the 372-residue chain is Envelope phospholipase OPG057 (372 aa).

A YPPL motif is present at residues 153 to 156 (YPPL). 2 S-palmitoyl cysteine; by host lipidation sites follow: Cys-185 and Cys-186. The PLD phosphodiesterase domain occupies 307 to 334 (FTIQNNTKLLIVDDEYVHITSANFDGTH).

Belongs to the orthopoxvirus OPG057 family. In terms of assembly, interacts with protein OPG190. In terms of processing, palmitoylated. Attachment of the palmitate moiety is essential for correct intracellular targeting and protein function.

The protein resides in the virion membrane. Its subcellular location is the host Golgi apparatus. The protein localises to the host trans-Golgi network. It localises to the host endoplasmic reticulum membrane. The catalysed reaction is a 1,2-diacyl-sn-glycero-3-phosphocholine + H2O = a 1,2-diacyl-sn-glycero-3-phosphate + choline + H(+). Its function is as follows. Major envelope protein that plays a role in the biogenesis of the viral double membrane and in egress of virus from the host cell. Produces the wrapped form of virus that is required for cell-to-cell spread. Acts as a lipase with broad specificity including phospholipase C, phospholipase A, and triacylglycerol lipase activities. The sequence is that of Envelope phospholipase OPG057 (OPG057) from Homo sapiens (Human).